We begin with the raw amino-acid sequence, 130 residues long: uncharacterized protein (130 aa).

This is an uncharacterized protein from Methanocaldococcus jannaschii (strain ATCC 43067 / DSM 2661 / JAL-1 / JCM 10045 / NBRC 100440) (Methanococcus jannaschii).